The primary structure comprises 415 residues: Meiotic driver wtf36 (415 aa).

Disordered regions lie at residues 1–49 (MKNK…DLNN) and 67–99 (TTPP…SGTA). A compositionally biased stretch (basic and acidic residues) spans 11-29 (SMDEMSAKNDNEIDLEKGP). The next 7 membrane-spanning stretches (helical) occupy residues 105 to 125 (FLIK…PAVC), 142 to 162 (WTLF…LTYF), 169 to 189 (AVKV…IFLA), 205 to 225 (VTAI…AQCV), 240 to 260 (VVII…RSKF), 274 to 294 (CSIS…FWTL), and 298 to 318 (FSGL…TKGL).

This sequence belongs to the WTF family. Homomer. Forms protein aggregates. The two isoforms can interact with each other and with themselves. High sequence similarity is required for their interaction.

Its subcellular location is the spore membrane. It localises to the vacuole membrane. The protein localises to the ascus epiplasm. It is found in the cytoplasm. The protein resides in the endoplasmic reticulum membrane. Promotes unequal transmission of alleles from the parental zygote to progeny spores by acting as poison/antidote system where the poison and antidote proteins are produced from the same locus; the poison component is trans-acting and targets all spores within an ascus whereas the antidote component is spore-specific, leading to poisoning of all progeny that do not inherit the allele. Functionally, localizes isoform 2 to the vacuole thereby facilitating its degradation. In terms of biological role, forms toxic aggregates that disrupt spore maturation. This Schizosaccharomyces pombe (Fission yeast) protein is Meiotic driver wtf36.